The primary structure comprises 315 residues: UDP-3-O-acyl-N-acetylglucosamine deacetylase (315 aa).

3 residues coordinate Zn(2+): histidine 78, histidine 235, and aspartate 239. Histidine 262 functions as the Proton donor in the catalytic mechanism.

This sequence belongs to the LpxC family. Zn(2+) serves as cofactor.

The catalysed reaction is a UDP-3-O-[(3R)-3-hydroxyacyl]-N-acetyl-alpha-D-glucosamine + H2O = a UDP-3-O-[(3R)-3-hydroxyacyl]-alpha-D-glucosamine + acetate. It participates in glycolipid biosynthesis; lipid IV(A) biosynthesis; lipid IV(A) from (3R)-3-hydroxytetradecanoyl-[acyl-carrier-protein] and UDP-N-acetyl-alpha-D-glucosamine: step 2/6. Catalyzes the hydrolysis of UDP-3-O-myristoyl-N-acetylglucosamine to form UDP-3-O-myristoylglucosamine and acetate, the committed step in lipid A biosynthesis. This Syntrophus aciditrophicus (strain SB) protein is UDP-3-O-acyl-N-acetylglucosamine deacetylase.